The primary structure comprises 341 residues: Elongation factor Ts, mitochondrial 2 (341 aa).

The N-terminal 17 residues, 1-17 (MLAARFASRAFPRTRLY), are a transit peptide targeting the mitochondrion.

The protein belongs to the EF-Ts family.

Its subcellular location is the mitochondrion. In terms of biological role, associates with the EF-Tu.GDP complex and induces the exchange of GDP to GTP. It remains bound to the aminoacyl-tRNA.EF-Tu.GTP complex up to the GTP hydrolysis stage on the ribosome. In Postia placenta (strain ATCC 44394 / Madison 698-R) (Brown rot fungus), this protein is Elongation factor Ts, mitochondrial 2.